The primary structure comprises 383 residues: MAHARDPTGAEIARFIATRTGAQMVQLMRCIKEPAAQAAFTAKLLVVPPAVSGRPATPEKARKALNAFVGFRCYYVTIPMFKSWPMKKLSNLIGLLWEADPNKSLWSLMAKAWSTIRDQIGKDQAPLDQFFRIICPHLKLPDPASYLEIHGWILTVNEEGDPTISRSADSEFVSIGTGNTDVALSVEDIITYVQSLGYAHGFILDDNKPSSTFLGQSVSSTLEKNTSAISVTQATPNAAHARFLVRNKRRAKRQAVRNASYRASLDQDILIAHQFNPAPVDEHMPDCHSNTAPVLDQCHNPSPNQFYDGITTLLSDQIPTGQGDAGHLDNAHLFNDYSLPGDVSFITIDDFTTNMPNLIDYDAFRLGADEDVALPIFDDITHI.

Positions 60–117 (KARKALNAFVGFRCYYVTIPMFKSWPMKKLSNLIGLLWEADPNKSLWSLMAKAWSTIR) form a DNA-binding region, alpha box.

It belongs to the MATALPHA1 family.

The protein resides in the nucleus. In terms of biological role, mating type proteins are sequence specific DNA-binding proteins that act as master switches in fungal differentiation by controlling gene expression in a cell type-specific fashion. Transcriptional activator that induces the transcription of alpha-specific genes. The sequence is that of Mating-type protein MAT-1 (MAT1) from Cochliobolus heterostrophus (Southern corn leaf blight fungus).